The following is a 31-amino-acid chain: Cytochrome b6-f complex subunit 6 (31 aa).

The chain crosses the membrane as a helical span at residues 4 to 24 (ITSYFGFLLAALTITSVLFIG).

This sequence belongs to the PetL family. In terms of assembly, the 4 large subunits of the cytochrome b6-f complex are cytochrome b6, subunit IV (17 kDa polypeptide, PetD), cytochrome f and the Rieske protein, while the 4 small subunits are PetG, PetL, PetM and PetN. The complex functions as a dimer.

It is found in the plastid. It localises to the chloroplast thylakoid membrane. In terms of biological role, component of the cytochrome b6-f complex, which mediates electron transfer between photosystem II (PSII) and photosystem I (PSI), cyclic electron flow around PSI, and state transitions. PetL is important for photoautotrophic growth as well as for electron transfer efficiency and stability of the cytochrome b6-f complex. The protein is Cytochrome b6-f complex subunit 6 of Nandina domestica (Heavenly bamboo).